The following is a 344-amino-acid chain: N-acetyl-gamma-glutamyl-phosphate reductase (344 aa).

Residue Cys-149 is part of the active site.

This sequence belongs to the NAGSA dehydrogenase family. Type 1 subfamily.

The protein resides in the cytoplasm. It catalyses the reaction N-acetyl-L-glutamate 5-semialdehyde + phosphate + NADP(+) = N-acetyl-L-glutamyl 5-phosphate + NADPH + H(+). It functions in the pathway amino-acid biosynthesis; L-arginine biosynthesis; N(2)-acetyl-L-ornithine from L-glutamate: step 3/4. Its function is as follows. Catalyzes the NADPH-dependent reduction of N-acetyl-5-glutamyl phosphate to yield N-acetyl-L-glutamate 5-semialdehyde. This Thermoanaerobacter sp. (strain X514) protein is N-acetyl-gamma-glutamyl-phosphate reductase.